A 508-amino-acid chain; its full sequence is Nucleolar complex protein 4 homolog (508 aa).

Transmembrane regions (helical) follow at residues 288 to 308, 341 to 361, and 367 to 387; these read VAYG…FILI, HLAD…AAFI, and LALT…CNLF.

It belongs to the CBF/MAK21 family.

It localises to the nucleus membrane. Its subcellular location is the nucleus. It is found in the nucleolus. In Gallus gallus (Chicken), this protein is Nucleolar complex protein 4 homolog (NOC4L).